Here is a 190-residue protein sequence, read N- to C-terminus: uncharacterized protein (190 aa).

A helical membrane pass occupies residues 1–21 (MLVMSITFSFVAVALLVYFYV). A compositionally biased stretch (basic and acidic residues) spans 103-114 (REEVCARPEHRS). The tract at residues 103 to 130 (REEVCARPEHRSAPSRAGSSAAKPTPTK) is disordered.

To B.burgdorferi BB0265.

The protein resides in the membrane. This is an uncharacterized protein from Treponema pallidum (strain Nichols).